Reading from the N-terminus, the 411-residue chain is Tyrosine--tRNA ligase (411 aa).

Residue Tyr34 participates in L-tyrosine binding. A 'HIGH' region motif is present at residues Cys39–Ser48. 2 residues coordinate L-tyrosine: Tyr171 and Gln175. A 'KMSKS' region motif is present at residues Lys231–Thr235. ATP is bound at residue Lys234. The 67-residue stretch at Ile345 to Val411 folds into the S4 RNA-binding domain.

Belongs to the class-I aminoacyl-tRNA synthetase family. TyrS type 1 subfamily. Homodimer.

It localises to the cytoplasm. The enzyme catalyses tRNA(Tyr) + L-tyrosine + ATP = L-tyrosyl-tRNA(Tyr) + AMP + diphosphate + H(+). Its function is as follows. Catalyzes the attachment of tyrosine to tRNA(Tyr) in a two-step reaction: tyrosine is first activated by ATP to form Tyr-AMP and then transferred to the acceptor end of tRNA(Tyr). In Rickettsia prowazekii (strain Madrid E), this protein is Tyrosine--tRNA ligase.